We begin with the raw amino-acid sequence, 178 residues long: ATP synthase subunit delta (178 aa).

The protein belongs to the ATPase delta chain family. In terms of assembly, F-type ATPases have 2 components, F(1) - the catalytic core - and F(0) - the membrane proton channel. F(1) has five subunits: alpha(3), beta(3), gamma(1), delta(1), epsilon(1). F(0) has three main subunits: a(1), b(2) and c(10-14). The alpha and beta chains form an alternating ring which encloses part of the gamma chain. F(1) is attached to F(0) by a central stalk formed by the gamma and epsilon chains, while a peripheral stalk is formed by the delta and b chains.

It localises to the cell inner membrane. F(1)F(0) ATP synthase produces ATP from ADP in the presence of a proton or sodium gradient. F-type ATPases consist of two structural domains, F(1) containing the extramembraneous catalytic core and F(0) containing the membrane proton channel, linked together by a central stalk and a peripheral stalk. During catalysis, ATP synthesis in the catalytic domain of F(1) is coupled via a rotary mechanism of the central stalk subunits to proton translocation. In terms of biological role, this protein is part of the stalk that links CF(0) to CF(1). It either transmits conformational changes from CF(0) to CF(1) or is implicated in proton conduction. The polypeptide is ATP synthase subunit delta (Acinetobacter baumannii (strain SDF)).